The sequence spans 775 residues: Acylamino-acid-releasing enzyme 1 (775 aa).

Active-site charge relay system residues include Ser-627, Asp-718, and His-750.

The protein belongs to the peptidase S9C family. As to quaternary structure, homotetramer.

Its subcellular location is the cytoplasm. It catalyses the reaction Cleavage of an N-acetyl or N-formyl amino acid from the N-terminus of a polypeptide.. In terms of biological role, catalyzes the hydrolysis of the N-terminal peptide bond of an N-acetylated peptide to generate an N-acetylated amino acid and a peptide with a free N-terminus. In Oryza sativa subsp. japonica (Rice), this protein is Acylamino-acid-releasing enzyme 1.